We begin with the raw amino-acid sequence, 134 residues long: Protein YhfA (134 aa).

The chain is Protein YhfA (yhfA) from Escherichia coli O157:H7.